We begin with the raw amino-acid sequence, 340 residues long: Dihydroorotate dehydrogenase (quinone) (340 aa).

FMN is bound by residues 65 to 69 (AGADK) and Thr89. Lys69 lines the substrate pocket. 114–118 (NRNGF) is a binding site for substrate. FMN contacts are provided by Asn142 and Asn175. Asn175 contributes to the substrate binding site. The Nucleophile role is filled by Ser178. Asn180 is a binding site for substrate. Lys220 and Thr248 together coordinate FMN. 249–250 (NT) provides a ligand contact to substrate. FMN contacts are provided by residues Gly271, Gly300, and 321-322 (YS).

It belongs to the dihydroorotate dehydrogenase family. Type 2 subfamily. Monomer. FMN serves as cofactor.

Its subcellular location is the cell membrane. The enzyme catalyses (S)-dihydroorotate + a quinone = orotate + a quinol. Its pathway is pyrimidine metabolism; UMP biosynthesis via de novo pathway; orotate from (S)-dihydroorotate (quinone route): step 1/1. Functionally, catalyzes the conversion of dihydroorotate to orotate with quinone as electron acceptor. This chain is Dihydroorotate dehydrogenase (quinone), found in Actinobacillus succinogenes (strain ATCC 55618 / DSM 22257 / CCUG 43843 / 130Z).